We begin with the raw amino-acid sequence, 397 residues long: Beta sliding clamp (397 aa).

This sequence belongs to the beta sliding clamp family. In terms of assembly, forms a ring-shaped head-to-tail homodimer around DNA which binds and tethers DNA polymerases and other proteins to the DNA. The DNA replisome complex has a single clamp-loading complex (3 tau and 1 each of delta, delta', psi and chi subunits) which binds 3 Pol III cores (1 core on the leading strand and 2 on the lagging strand) each with a beta sliding clamp dimer. Additional proteins in the replisome are other copies of gamma, psi and chi, Ssb, DNA helicase and RNA primase.

It localises to the cytoplasm. In terms of biological role, confers DNA tethering and processivity to DNA polymerases and other proteins. Acts as a clamp, forming a ring around DNA (a reaction catalyzed by the clamp-loading complex) which diffuses in an ATP-independent manner freely and bidirectionally along dsDNA. Initially characterized for its ability to contact the catalytic subunit of DNA polymerase III (Pol III), a complex, multichain enzyme responsible for most of the replicative synthesis in bacteria; Pol III exhibits 3'-5' exonuclease proofreading activity. The beta chain is required for initiation of replication as well as for processivity of DNA replication. This Mycolicibacterium smegmatis (strain ATCC 700084 / mc(2)155) (Mycobacterium smegmatis) protein is Beta sliding clamp (dnaN).